The following is a 427-amino-acid chain: UPF0229 protein YeaH (427 aa).

Over residues 79–90 the composition is skewed to basic and acidic residues; the sequence is NDHFVQNDRIER. The segment at 79-110 is disordered; that stretch reads NDHFVQNDRIERPQGGGGGSGSGQGQASQDGE. A compositionally biased stretch (gly residues) spans 92 to 102; sequence QGGGGGSGSGQ.

This sequence belongs to the UPF0229 family.

This is UPF0229 protein YeaH from Shigella boydii serotype 18 (strain CDC 3083-94 / BS512).